A 501-amino-acid chain; its full sequence is ATP synthase subunit alpha (501 aa).

169-176 (GDRQTGKT) is an ATP binding site.

The protein belongs to the ATPase alpha/beta chains family. F-type ATPases have 2 components, CF(1) - the catalytic core - and CF(0) - the membrane proton channel. CF(1) has five subunits: alpha(3), beta(3), gamma(1), delta(1), epsilon(1). CF(0) has three main subunits: a(1), b(2) and c(9-12). The alpha and beta chains form an alternating ring which encloses part of the gamma chain. CF(1) is attached to CF(0) by a central stalk formed by the gamma and epsilon chains, while a peripheral stalk is formed by the delta and b chains.

The protein localises to the cell membrane. The catalysed reaction is ATP + H2O + 4 H(+)(in) = ADP + phosphate + 5 H(+)(out). Its function is as follows. Produces ATP from ADP in the presence of a proton gradient across the membrane. The alpha chain is a regulatory subunit. The chain is ATP synthase subunit alpha from Streptococcus pneumoniae serotype 4 (strain ATCC BAA-334 / TIGR4).